Here is a 539-residue protein sequence, read N- to C-terminus: Protein PNS1 (539 aa).

The segment at Met1–Gly38 is disordered. Topologically, residues Met1–Trp81 are cytoplasmic. Over residues Ser25–Asn36 the composition is skewed to low complexity. Residues Pro82–Leu102 traverse the membrane as a helical segment. Topologically, residues Arg103–Ala129 are extracellular. The helical transmembrane segment at Ala130–Leu150 threads the bilayer. The Cytoplasmic portion of the chain corresponds to Cys151–Gln157. The helical transmembrane segment at Phe158–Met178 threads the bilayer. Topologically, residues Ser179–Tyr182 are extracellular. Residues Trp183–Met203 traverse the membrane as a helical segment. Over Arg204 to Gln226 the chain is Cytoplasmic. A helical transmembrane segment spans residues Ile227–Ala247. At Val248–His274 the chain is on the extracellular side. A glycan (N-linked (GlcNAc...) asparagine) is linked at Asn259. A helical transmembrane segment spans residues Ser275–Ile295. Over Arg296–Ala332 the chain is Cytoplasmic. The helical transmembrane segment at Met333 to Leu353 threads the bilayer. Over Arg354–Gln371 the chain is Extracellular. A helical transmembrane segment spans residues Ile372 to Ala392. The Cytoplasmic segment spans residues Glu393–Asn436. Residues Ile437–Tyr457 traverse the membrane as a helical segment. Over Leu458–Gly473 the chain is Extracellular. A helical membrane pass occupies residues Ala474–Ile494. The Cytoplasmic segment spans residues Arg495 to Val539.

It belongs to the CTL (choline transporter-like) family.

The protein localises to the cell membrane. In terms of biological role, probably involved in transport through the plasma membrane. In Saccharomyces cerevisiae (strain ATCC 204508 / S288c) (Baker's yeast), this protein is Protein PNS1 (PNS1).